The following is a 189-amino-acid chain: Thymidine kinase (189 aa).

ATP is bound by residues 9–16 (GTMNSGKT) and 85–88 (DESQ). Glu86 acts as the Proton acceptor in catalysis. Residues Cys143, Cys146, Cys180, and His183 each contribute to the Zn(2+) site.

The protein belongs to the thymidine kinase family. As to quaternary structure, homotetramer.

It localises to the cytoplasm. It carries out the reaction thymidine + ATP = dTMP + ADP + H(+). The protein is Thymidine kinase of Streptococcus pyogenes serotype M3 (strain ATCC BAA-595 / MGAS315).